Reading from the N-terminus, the 87-residue chain is HssA/B-like protein 57 (87 aa).

The protein belongs to the hssA/B family.

This chain is HssA/B-like protein 57 (hssl57), found in Dictyostelium discoideum (Social amoeba).